Consider the following 358-residue polypeptide: Na(+)/H(+) exchange regulatory cofactor NHE-RF1 (358 aa).

The residue at position 2 (Ser2) is an N-acetylserine. Residues Ser2 and Ser46 each carry the phosphoserine modification. One can recognise a PDZ 1 domain in the interval 14–94 (LCCLEKGPNG…AVRLLVVDPD (81 aa)). Positions 114-134 (QAGPEQAGPPAAPGEQGPAGE) are enriched in low complexity. Residues 114 to 151 (QAGPEQAGPPAAPGEQGPAGENEPREVEKSHPERRELR) are disordered. The span at 135 to 151 (NEPREVEKSHPERRELR) shows a compositional bias: basic and acidic residues. Positions 154 to 234 (LCAMKKGPNG…EAKLLVVDKE (81 aa)) constitute a PDZ 2 domain. The interval 247–358 (SSEHLNGPLP…SEKKELFSNL (112 aa)) is disordered. Positions 272 to 290 (LAPAASESPRPALARSASS) are enriched in low complexity. Residues Ser279, Ser289, and Ser290 each carry the phosphoserine modification. Thr292 carries the phosphothreonine modification. Phosphoserine occurs at positions 293, 298, and 301. Residues 308 to 327 (TAPSSTSSSSDPILDFSISL) show a composition bias toward low complexity. Basic and acidic residues predominate over residues 348-358 (WSEKKELFSNL).

Homodimer, and heterodimer with NHERF2. Binds the N-termini of EZR, RDX and MSN. Binds the C-termini of PDGFRA, PDGFRB, ADRB2, NOS2 and CFTR. Binds ARHGAP17, EPI64, RACK1, OPRK1, GNAQ, CTNNB1 and PLCB3. Binds PDZK1. Interacts with CLCN3. Binds the C-terminus of PAG1. In resting T-cells, part of a PAG1-NHERF1-MSN complex which is disrupted upon TCR activation. Forms a complex with CFTR and SLC4A7. Forms a complex with SLC4A7 and ATP6V1B1. Interacts with TRPC4 (via the PDZ-binding domain). Directly interacts with HTR4. Interacts (via the PDZ 1 domain) with PODXL (via the C-terminal PDZ-binding motif DTHL); interaction is not detected in glomerular epithelium cells. Interacts (via the PDZ 1 domain) with PODXL (via the C-terminal PDZ-binding motif DTHL); the interaction take place early in the secretory pathway and is necessary for its apical membrane sorting. Interacts with SLC26A3. Interacts with MCC. Interacts with SLC34A1. Interacts (via the PDZ domains) with SLC26A6 isoform 4 and isoform 5. Interacts (via PDZ domains) with ACE2 (via PDZ-binding motif); the interaction may enhance ACE2 membrane residence. Post-translationally, phosphorylated on serine residues. In terms of tissue distribution, detected in ileum, duodenum and in kidney, where it is found in the glomerulus, the proximal tubule, the thick ascending limb of Henle's loop and the cortical collecting duct.

The protein resides in the cytoplasm. It localises to the apical cell membrane. Its subcellular location is the cell projection. It is found in the filopodium. The protein localises to the ruffle. The protein resides in the microvillus. It localises to the endomembrane system. Its function is as follows. Scaffold protein that connects plasma membrane proteins with members of the ezrin/moesin/radixin family and thereby helps to link them to the actin cytoskeleton and to regulate their surface expression. Necessary for recycling of internalized ADRB2. Was first known to play a role in the regulation of the activity and subcellular location of SLC9A3. Necessary for cAMP-mediated phosphorylation and inhibition of SLC9A3. Involved in sperm capacitation. May participate in the regulation of the chloride and bicarbonate homeostasis in spermatozoa. May enhance Wnt signaling. May participate in HTR4 targeting to microvilli. Involved in the regulation of phosphate reabsorption in the renal proximal tubules. This is Na(+)/H(+) exchange regulatory cofactor NHE-RF1 (NHERF1) from Oryctolagus cuniculus (Rabbit).